Consider the following 533-residue polypeptide: Putative replication factor C large subunit (533 aa).

A compositionally biased stretch (polar residues) spans 1-11; it reads MSKTAKNTKTI. The interval 1 to 31 is disordered; that stretch reads MSKTAKNTKTIKSVKSVNKDNKPNKDNKDDK. Over residues 17–31 the composition is skewed to basic and acidic residues; that stretch reads VNKDNKPNKDNKDDK.

Belongs to the activator 1 large subunit family.

Functionally, part of the RFC clamp loader complex which loads the PCNA sliding clamp onto DNA. The polypeptide is Putative replication factor C large subunit (Acanthamoeba polyphaga (Amoeba)).